Here is a 149-residue protein sequence, read N- to C-terminus: D-aminoacyl-tRNA deacylase (149 aa).

The Gly-cisPro motif, important for rejection of L-amino acids signature appears at Gly-137–Pro-138.

This sequence belongs to the DTD family. Homodimer.

Its subcellular location is the cytoplasm. It catalyses the reaction glycyl-tRNA(Ala) + H2O = tRNA(Ala) + glycine + H(+). It carries out the reaction a D-aminoacyl-tRNA + H2O = a tRNA + a D-alpha-amino acid + H(+). Its function is as follows. An aminoacyl-tRNA editing enzyme that deacylates mischarged D-aminoacyl-tRNAs. Also deacylates mischarged glycyl-tRNA(Ala), protecting cells against glycine mischarging by AlaRS. Acts via tRNA-based rather than protein-based catalysis; rejects L-amino acids rather than detecting D-amino acids in the active site. By recycling D-aminoacyl-tRNA to D-amino acids and free tRNA molecules, this enzyme counteracts the toxicity associated with the formation of D-aminoacyl-tRNA entities in vivo and helps enforce protein L-homochirality. This Syntrophobacter fumaroxidans (strain DSM 10017 / MPOB) protein is D-aminoacyl-tRNA deacylase.